Here is a 416-residue protein sequence, read N- to C-terminus: Homeobox even-skipped homolog protein 1 (416 aa).

2 disordered regions span residues alanine 30–tyrosine 120 and tyrosine 138–serine 178. A compositionally biased stretch (low complexity) spans glycine 72–alanine 82. Over residues aspartate 102–aspartate 114 the composition is skewed to polar residues. A DNA-binding region (homeobox) is located at residues methionine 183–arginine 242.

The protein belongs to the even-skipped homeobox family.

It is found in the nucleus. May play a role in the specification of neuronal cell types. May play a role in the dorsoventral specification of mesodermal cell fate. This chain is Homeobox even-skipped homolog protein 1 (Evx1), found in Mus musculus (Mouse).